Here is a 231-residue protein sequence, read N- to C-terminus: Large ribosomal subunit protein uL1 (231 aa).

The protein belongs to the universal ribosomal protein uL1 family. Part of the 50S ribosomal subunit.

Binds directly to 23S rRNA. The L1 stalk is quite mobile in the ribosome, and is involved in E site tRNA release. In terms of biological role, protein L1 is also a translational repressor protein, it controls the translation of the L11 operon by binding to its mRNA. In Beijerinckia indica subsp. indica (strain ATCC 9039 / DSM 1715 / NCIMB 8712), this protein is Large ribosomal subunit protein uL1.